The chain runs to 468 residues: 6-phospho-beta-galactosidase (468 aa).

The D-galactose 6-phosphate site is built by glutamine 19, histidine 116, asparagine 159, glutamate 160, and asparagine 297. Catalysis depends on glutamate 160, which acts as the Proton donor. The active-site Nucleophile is glutamate 375. The D-galactose 6-phosphate site is built by serine 428, tryptophan 429, lysine 435, and tyrosine 437.

The protein belongs to the glycosyl hydrolase 1 family.

The catalysed reaction is a 6-phospho-beta-D-galactoside + H2O = D-galactose 6-phosphate + an alcohol. Its pathway is carbohydrate metabolism; lactose degradation; D-galactose 6-phosphate and beta-D-glucose from lactose 6-phosphate: step 1/1. The polypeptide is 6-phospho-beta-galactosidase (Streptococcus mutans serotype c (strain ATCC 700610 / UA159)).